Consider the following 824-residue polypeptide: Leucine--tRNA ligase (824 aa).

The short motif at 40-50 (PYPSGKIHMGH) is the 'HIGH' region element. The 'KMSKS' region motif lies at 580 to 584 (KMSKS). An ATP-binding site is contributed by lysine 583.

Belongs to the class-I aminoacyl-tRNA synthetase family.

Its subcellular location is the cytoplasm. It catalyses the reaction tRNA(Leu) + L-leucine + ATP = L-leucyl-tRNA(Leu) + AMP + diphosphate. The sequence is that of Leucine--tRNA ligase from Alkaliphilus metalliredigens (strain QYMF).